The chain runs to 170 residues: Small ribosomal subunit protein bS18c (170 aa).

The interval 1–61 is disordered; sequence MYTSKQPFLK…RRPRIGPGDR (61 aa). Over residues 13 to 26 the composition is skewed to polar residues; the sequence is QPFSKSKQTFNKSK. Over residues 27-55 the composition is skewed to basic residues; the sequence is QPFRKSKQTFRKFKQPFRKSKQPFRRRPR.

The protein belongs to the bacterial ribosomal protein bS18 family. As to quaternary structure, part of the 30S ribosomal subunit.

It localises to the plastid. The protein localises to the chloroplast. The sequence is that of Small ribosomal subunit protein bS18c from Hordeum vulgare (Barley).